Here is a 189-residue protein sequence, read N- to C-terminus: Urease accessory protein UreF (189 aa).

It belongs to the UreF family. In terms of assembly, ureD, UreF and UreG form a complex that acts as a GTP-hydrolysis-dependent molecular chaperone, activating the urease apoprotein by helping to assemble the nickel containing metallocenter of UreC. The UreE protein probably delivers the nickel.

The protein resides in the cytoplasm. Required for maturation of urease via the functional incorporation of the urease nickel metallocenter. This chain is Urease accessory protein UreF, found in Staphylococcus xylosus.